Consider the following 604-residue polypeptide: Inactive all-trans-retinol 13,14-reductase (604 aa).

Residues 1 to 17 (MWWILLFLEWFVDWARG) form the signal peptide.

This sequence belongs to the carotenoid/retinoid oxidoreductase family. CrtISO subfamily.

The protein is Inactive all-trans-retinol 13,14-reductase (retsatl) of Danio rerio (Zebrafish).